Consider the following 366-residue polypeptide: MAP kinase-activated protein kinase 2 (366 aa).

The 262-residue stretch at 30-291 (KVTSQVLGLG…ITEFMNHPWI (262 aa)) folds into the Protein kinase domain. ATP contacts are provided by residues 36–44 (LGLGINGKV) and Lys59. Staurosporine is bound at residue 105-107 (ECL). The Proton acceptor role is filled by Asp152. Thr188 is modified (phosphothreonine; by MAPK14). Ser238 carries the phosphoserine; by MAPK14 modification. Ser294 is subject to Phosphoserine; by autocatalysis. Residues 294–330 (STKVPQTPLHTSRVLKEDKERWEDVKEEMTSALATMR) are autoinhibitory helix. Thr300 is subject to Phosphothreonine; by MAPK14. Lys319 is covalently cross-linked (Glycyl lysine isopeptide (Lys-Gly) (interchain with G-Cter in SUMO)). The Nuclear export signal (NES) signature appears at 322-331 (MTSALATMRV). The tract at residues 332–356 (DYEQIKIKKIEDASNPLLLKRRKKA) is p38 MAPK-binding site. Short sequence motifs (bipartite nuclear localization signal) lie at residues 337–340 (KIKK) and 351–355 (KRRKK).

The protein belongs to the protein kinase superfamily. CAMK Ser/Thr protein kinase family. As to quaternary structure, heterodimer with p38-alpha/MAPK14; this heterodimer forms a stable complex: molecules are positioned 'face to face' so that the ATP-binding sites of both kinases are at the heterodimer interface. Interacts with PHC2. Interacts with HSF1. Sumoylation inhibits the protein kinase activity. In terms of processing, phosphorylated and activated by MAP kinase p38-alpha/MAPK14 at Thr-188, Ser-238 and Thr-300.

It localises to the cytoplasm. The protein resides in the nucleus. The catalysed reaction is L-seryl-[protein] + ATP = O-phospho-L-seryl-[protein] + ADP + H(+). The enzyme catalyses L-threonyl-[protein] + ATP = O-phospho-L-threonyl-[protein] + ADP + H(+). With respect to regulation, activated following phosphorylation by p38-alpha/MAPK14 following various stresses. Inhibited following sumoylation. Specifically inhibited by pyrrolopyridine inhibitors. In terms of biological role, stress-activated serine/threonine-protein kinase involved in cytokine production, endocytosis, reorganization of the cytoskeleton, cell migration, cell cycle control, chromatin remodeling, DNA damage response and transcriptional regulation. Following stress, it is phosphorylated and activated by MAP kinase p38-alpha/MAPK14, leading to phosphorylation of substrates. Phosphorylates serine in the peptide sequence, Hyd-X-R-X(2)-S, where Hyd is a large hydrophobic residue. Phosphorylates ALOX5, CDC25B, CDC25C, CEP131, ELAVL1, HNRNPA0, HSP27/HSPB1, KRT18, KRT20, LIMK1, LSP1, PABPC1, PARN, PDE4A, RCSD1, RPS6KA3, TAB3 and TTP/ZFP36. Phosphorylates HSF1; leading to the interaction with HSP90 proteins and inhibiting HSF1 homotrimerization, DNA-binding and transactivation activities. Mediates phosphorylation of HSP27/HSPB1 in response to stress, leading to dissociation of HSP27/HSPB1 from large small heat-shock protein (sHsps) oligomers and impairment of their chaperone activities and ability to protect against oxidative stress effectively. Involved in inflammatory response by regulating tumor necrosis factor (TNF) and IL6 production post-transcriptionally: acts by phosphorylating AU-rich elements (AREs)-binding proteins ELAVL1, HNRNPA0, PABPC1 and TTP/ZFP36, leading to regulate the stability and translation of TNF and IL6 mRNAs. Phosphorylation of TTP/ZFP36, a major post-transcriptional regulator of TNF, promotes its binding to 14-3-3 proteins and reduces its ARE mRNA affinity leading to inhibition of dependent degradation of ARE-containing transcripts. Phosphorylates CEP131 in response to cellular stress following ultraviolet irradiation which promotes binding of CEP131 to 14-3-3 proteins and inhibits formation of novel centriolar satellites. Also involved in late G2/M checkpoint following DNA damage through a process of post-transcriptional mRNA stabilization: following DNA damage, relocalizes from nucleus to cytoplasm and phosphorylates HNRNPA0 and PARN, leading to stabilization of GADD45A mRNA. Involved in toll-like receptor signaling pathway (TLR) in dendritic cells: required for acute TLR-induced macropinocytosis by phosphorylating and activating RPS6KA3. The chain is MAP kinase-activated protein kinase 2 (MAPKAPK2) from Oryctolagus cuniculus (Rabbit).